The primary structure comprises 167 residues: NAD(P)H-quinone oxidoreductase subunit I, chloroplastic (167 aa).

4Fe-4S ferredoxin-type domains lie at 55-84 (GRIH…VDWK) and 95-124 (LNYS…MTEE). Residues Cys64, Cys67, Cys70, Cys74, Cys104, Cys107, Cys110, and Cys114 each contribute to the [4Fe-4S] cluster site.

Belongs to the complex I 23 kDa subunit family. NDH is composed of at least 16 different subunits, 5 of which are encoded in the nucleus. [4Fe-4S] cluster serves as cofactor.

It localises to the plastid. The protein resides in the chloroplast thylakoid membrane. It carries out the reaction a plastoquinone + NADH + (n+1) H(+)(in) = a plastoquinol + NAD(+) + n H(+)(out). The catalysed reaction is a plastoquinone + NADPH + (n+1) H(+)(in) = a plastoquinol + NADP(+) + n H(+)(out). Its function is as follows. NDH shuttles electrons from NAD(P)H:plastoquinone, via FMN and iron-sulfur (Fe-S) centers, to quinones in the photosynthetic chain and possibly in a chloroplast respiratory chain. The immediate electron acceptor for the enzyme in this species is believed to be plastoquinone. Couples the redox reaction to proton translocation, and thus conserves the redox energy in a proton gradient. This is NAD(P)H-quinone oxidoreductase subunit I, chloroplastic from Atropa belladonna (Belladonna).